The following is a 113-amino-acid chain: Ribonuclease P protein component (113 aa).

The span at 1–10 (MLPTRHRMRT) shows a compositional bias: basic residues. Residues 1–23 (MLPTRHRMRTSAHFSTTVRSGAR) form a disordered region.

This sequence belongs to the RnpA family. In terms of assembly, consists of a catalytic RNA component (M1 or rnpB) and a protein subunit.

It catalyses the reaction Endonucleolytic cleavage of RNA, removing 5'-extranucleotides from tRNA precursor.. Its function is as follows. RNaseP catalyzes the removal of the 5'-leader sequence from pre-tRNA to produce the mature 5'-terminus. It can also cleave other RNA substrates such as 4.5S RNA. The protein component plays an auxiliary but essential role in vivo by binding to the 5'-leader sequence and broadening the substrate specificity of the ribozyme. The chain is Ribonuclease P protein component from Kocuria rhizophila (strain ATCC 9341 / DSM 348 / NBRC 103217 / DC2201).